The chain runs to 388 residues: Pectin acetylesterase 1 (388 aa).

The signal sequence occupies residues 1–24 (MKTLLYWGWSSLAGLILFSILAHG). 2 N-linked (GlcNAc...) asparagine glycosylation sites follow: asparagine 30 and asparagine 33. Residues serine 187 and aspartate 283 each act as charge relay system in the active site. A glycan (N-linked (GlcNAc...) asparagine) is linked at asparagine 304. The Charge relay system role is filled by histidine 349.

This sequence belongs to the pectinacetylesterase family.

Its subcellular location is the secreted. It localises to the cell wall. Hydrolyzes acetyl esters in homogalacturonan regions of pectin. In type I primary cell wall, galacturonic acid residues of pectin can be acetylated at the O-2 and O-3 positions. Decreasing the degree of acetylation of pectin gels in vitro alters their physical properties. The chain is Pectin acetylesterase 1 from Arabidopsis thaliana (Mouse-ear cress).